Reading from the N-terminus, the 287-residue chain is Ribosomal RNA small subunit methyltransferase I (287 aa).

This sequence belongs to the methyltransferase superfamily. RsmI family.

It is found in the cytoplasm. The catalysed reaction is cytidine(1402) in 16S rRNA + S-adenosyl-L-methionine = 2'-O-methylcytidine(1402) in 16S rRNA + S-adenosyl-L-homocysteine + H(+). In terms of biological role, catalyzes the 2'-O-methylation of the ribose of cytidine 1402 (C1402) in 16S rRNA. The sequence is that of Ribosomal RNA small subunit methyltransferase I from Streptococcus pyogenes serotype M6 (strain ATCC BAA-946 / MGAS10394).